Consider the following 353-residue polypeptide: Photosystem II D2 protein (353 aa).

Threonine 2 carries the N-acetylthreonine modification. Threonine 2 is modified (phosphothreonine). A helical membrane pass occupies residues 41-61; the sequence is CAYFSLGGWFTGTTFVTSWYT. Histidine 118 lines the chlorophyll a pocket. A helical membrane pass occupies residues 125-141; the sequence is GFMLRQFELARSVQLRP. Pheophytin a is bound by residues glutamine 130 and asparagine 143. The chain crosses the membrane as a helical span at residues 153-166; it reads VFVSVFLIYPLGQS. Chlorophyll a is bound at residue histidine 198. Residues 208–228 form a helical membrane-spanning segment; that stretch reads AALLCAIHGATVENTLFEDGD. A plastoquinone-binding residues include histidine 215 and phenylalanine 262. Residue histidine 215 coordinates Fe cation. A Fe cation-binding site is contributed by histidine 269. A helical transmembrane segment spans residues 279-295; it reads GLWMSAIGVVGLALNLR.

This sequence belongs to the reaction center PufL/M/PsbA/D family. PSII is composed of 1 copy each of membrane proteins PsbA, PsbB, PsbC, PsbD, PsbE, PsbF, PsbH, PsbI, PsbJ, PsbK, PsbL, PsbM, PsbT, PsbX, PsbY, PsbZ, Psb30/Ycf12, at least 3 peripheral proteins of the oxygen-evolving complex and a large number of cofactors. It forms dimeric complexes. The D1/D2 heterodimer binds P680, chlorophylls that are the primary electron donor of PSII, and subsequent electron acceptors. It shares a non-heme iron and each subunit binds pheophytin, quinone, additional chlorophylls, carotenoids and lipids. There is also a Cl(-1) ion associated with D1 and D2, which is required for oxygen evolution. The PSII complex binds additional chlorophylls, carotenoids and specific lipids. is required as a cofactor.

The protein localises to the plastid. It is found in the chloroplast thylakoid membrane. It carries out the reaction 2 a plastoquinone + 4 hnu + 2 H2O = 2 a plastoquinol + O2. In terms of biological role, photosystem II (PSII) is a light-driven water:plastoquinone oxidoreductase that uses light energy to abstract electrons from H(2)O, generating O(2) and a proton gradient subsequently used for ATP formation. It consists of a core antenna complex that captures photons, and an electron transfer chain that converts photonic excitation into a charge separation. The D1/D2 (PsbA/PsbD) reaction center heterodimer binds P680, the primary electron donor of PSII as well as several subsequent electron acceptors. D2 is needed for assembly of a stable PSII complex. In Physcomitrium patens (Spreading-leaved earth moss), this protein is Photosystem II D2 protein.